A 419-amino-acid chain; its full sequence is Protein FAM217A (419 aa).

4 disordered regions span residues 1-60, 96-119, 236-299, and 317-382; these read MGRK…LENP, KGST…DLSE, SSSK…SRAL, and KNSK…RTKK. Residues 7–19 show a composition bias toward low complexity; the sequence is ESCSSSLHVSSIS. The segment covering 236-251 has biased composition (low complexity); sequence SSSKAIATKAKAPKIP. Composition is skewed to polar residues over residues 252–261 and 271–281; these read ETSTLQTSGV and NSGSGKPEQNV. Low complexity-rich tracts occupy residues 282–296 and 334–345; these read SKWS…KSNS and PTTTTQATQPMA.

Belongs to the FAM217 family.

This is Protein FAM217A (Fam217a) from Mus musculus (Mouse).